The chain runs to 348 residues: Heptaprenyl diphosphate synthase component 2 (348 aa).

The isopentenyl diphosphate site is built by Lys73, Arg76, and His105. The Mg(2+) site is built by Asp112 and Asp116. Arg121 lines the all-trans-hexaprenyl diphosphate pocket. Arg122 contacts isopentenyl diphosphate. All-trans-hexaprenyl diphosphate is bound by residues Lys198, Thr199, and Gln236.

Belongs to the FPP/GGPP synthase family. In terms of assembly, heterodimer of component I and II. Requires Mg(2+) as cofactor.

The catalysed reaction is 4 isopentenyl diphosphate + (2E,6E)-farnesyl diphosphate = all-trans-heptaprenyl diphosphate + 4 diphosphate. In terms of biological role, supplies heptaprenyl diphosphate, the precursor for the side chain of the isoprenoid quinone menaquinone-7 (MQ-7). In Bacillus subtilis (strain 168), this protein is Heptaprenyl diphosphate synthase component 2 (hepT).